A 500-amino-acid chain; its full sequence is Aspartyl/glutamyl-tRNA(Asn/Gln) amidotransferase subunit B (500 aa).

This sequence belongs to the GatB/GatE family. GatB subfamily. Heterotrimer of A, B and C subunits.

It catalyses the reaction L-glutamyl-tRNA(Gln) + L-glutamine + ATP + H2O = L-glutaminyl-tRNA(Gln) + L-glutamate + ADP + phosphate + H(+). It carries out the reaction L-aspartyl-tRNA(Asn) + L-glutamine + ATP + H2O = L-asparaginyl-tRNA(Asn) + L-glutamate + ADP + phosphate + 2 H(+). Functionally, allows the formation of correctly charged Asn-tRNA(Asn) or Gln-tRNA(Gln) through the transamidation of misacylated Asp-tRNA(Asn) or Glu-tRNA(Gln) in organisms which lack either or both of asparaginyl-tRNA or glutaminyl-tRNA synthetases. The reaction takes place in the presence of glutamine and ATP through an activated phospho-Asp-tRNA(Asn) or phospho-Glu-tRNA(Gln). The sequence is that of Aspartyl/glutamyl-tRNA(Asn/Gln) amidotransferase subunit B from Rhizobium johnstonii (strain DSM 114642 / LMG 32736 / 3841) (Rhizobium leguminosarum bv. viciae).